Here is a 328-residue protein sequence, read N- to C-terminus: Methionine import ATP-binding protein MetN 1 (328 aa).

In terms of domain architecture, ABC transporter spans 2–241 (ISIERLSKTY…PLSRLGRSLL (240 aa)). An ATP-binding site is contributed by 38–45 (GRSGAGKS).

This sequence belongs to the ABC transporter superfamily. Methionine importer (TC 3.A.1.24) family. The complex is composed of two ATP-binding proteins (MetN), two transmembrane proteins (MetI) and a solute-binding protein (MetQ).

The protein resides in the cell inner membrane. The catalysed reaction is L-methionine(out) + ATP + H2O = L-methionine(in) + ADP + phosphate + H(+). It catalyses the reaction D-methionine(out) + ATP + H2O = D-methionine(in) + ADP + phosphate + H(+). Functionally, part of the ABC transporter complex MetNIQ involved in methionine import. Responsible for energy coupling to the transport system. The sequence is that of Methionine import ATP-binding protein MetN 1 from Yersinia pestis bv. Antiqua (strain Nepal516).